Here is a 197-residue protein sequence, read N- to C-terminus: HTH-type transcriptional regulator BetI (197 aa).

The HTH tetR-type domain occupies 8-68 (PIRRQQLIEA…ATMRYLMNAL (61 aa)). Positions 31 to 50 (SIALIARLAGVSNGIISHYF) form a DNA-binding region, H-T-H motif.

The protein operates within amine and polyamine biosynthesis; betaine biosynthesis via choline pathway [regulation]. Functionally, repressor involved in the biosynthesis of the osmoprotectant glycine betaine. It represses transcription of the choline transporter BetT and the genes of BetAB involved in the synthesis of glycine betaine. The protein is HTH-type transcriptional regulator BetI of Pseudomonas fluorescens (strain SBW25).